The sequence spans 254 residues: Ribonuclease 3 (254 aa).

The RNase III domain maps to 24–154; it reads LRRLQETLGV…VIGALFLDSG (131 aa). Glu67 provides a ligand contact to Mg(2+). The active site involves Asp71. Mg(2+) contacts are provided by Asp140 and Glu143. Glu143 is a catalytic residue. In terms of domain architecture, DRBM spans 181–250; sequence DYKSTLQVLA…ARLAWEQLSG (70 aa).

This sequence belongs to the ribonuclease III family. Homodimer. Requires Mg(2+) as cofactor.

It is found in the cytoplasm. It catalyses the reaction Endonucleolytic cleavage to 5'-phosphomonoester.. Its function is as follows. Digests double-stranded RNA. Involved in the processing of primary rRNA transcript to yield the immediate precursors to the large and small rRNAs (23S and 16S). Processes some mRNAs, and tRNAs when they are encoded in the rRNA operon. Processes pre-crRNA and tracrRNA of type II CRISPR loci if present in the organism. In Treponema pallidum (strain Nichols), this protein is Ribonuclease 3.